An 89-amino-acid polypeptide reads, in one-letter code: U-scoloptoxin(11)-Sm4a (89 aa).

The signal sequence occupies residues 1 to 17 (MFFKLVLVSAVAIQALS).

The protein belongs to the scoloptoxin-11 family. In terms of processing, contains 3 disulfide bonds. In terms of tissue distribution, expressed by the venom gland.

The protein resides in the secreted. This is U-scoloptoxin(11)-Sm4a from Scolopendra morsitans (Tanzanian blue ringleg centipede).